The primary structure comprises 276 residues: Probable NADH-ubiquinone oxidoreductase 30.4 kDa subunit, mitochondrial (276 aa).

Residues 248 to 276 (EPVGEGKDFTPESFKLPTPQPEPEQEEKK) form a disordered region.

The protein belongs to the complex I 30 kDa subunit family. Complex I is composed of about 30 different subunits. This is a component of the iron-sulfur protein fraction.

The protein resides in the mitochondrion inner membrane. It catalyses the reaction a ubiquinone + NADH + 5 H(+)(in) = a ubiquinol + NAD(+) + 4 H(+)(out). Core subunit of the mitochondrial membrane respiratory chain NADH dehydrogenase (Complex I) that is believed to belong to the minimal assembly required for catalysis. Complex I functions in the transfer of electrons from NADH to the respiratory chain. The immediate electron acceptor for the enzyme is believed to be ubiquinone. Essential for N-alkane assimilation. This chain is Probable NADH-ubiquinone oxidoreductase 30.4 kDa subunit, mitochondrial (ALI1), found in Candida maltosa (Yeast).